The primary structure comprises 261 residues: Probable pectin methylesterase CGR2 (261 aa).

The Cytoplasmic portion of the chain corresponds to 1–35 (MARRQVGSTRRVGDGGSFPFAGALHSKSRSSPLLS). The chain crosses the membrane as a helical span at residues 36-56 (ICLVLVGACLLIGYAYSGPGI). Residues 57 to 261 (FKSIKEVSKV…CQVFHLKPLH (205 aa)) lie on the Lumenal side of the membrane. An N-linked (GlcNAc...) asparagine glycan is attached at Asn-174.

Belongs to the class I-like SAM-binding methyltransferase superfamily.

The protein localises to the golgi apparatus membrane. In terms of biological role, together with CGR3, required for homogalacturonan pectins (HG) methylesterification in the Golgi apparatus prior to integration into cell walls, essential for general growth and development. Promotes rosette growth. Impacts carbon (C) partitioning, photosynthesis and respiration efficiency by influencing leaf mesophyll cell walls morphology and physiology; pectin methylesterification modulates both expansion and positioning of cells in leaves, probably by changing cell walls plasticity. The chain is Probable pectin methylesterase CGR2 from Arabidopsis thaliana (Mouse-ear cress).